The following is a 383-amino-acid chain: Omega-6 fatty acid desaturase, endoplasmic reticulum isozyme 2 (383 aa).

The next 3 membrane-spanning stretches (helical) occupy residues 61 to 81 (TIAFCLYYVATHYFHLLPGPL), 85 to 105 (GMAIYWAVQGCILTGVWVIAH), and 117 to 137 (LLDDIVGLILHSALLVPYFSW). Residues 105–109 (HECGH) carry the Histidine box-1 motif. The Histidine box-2 motif lies at 141–145 (HRRHH). 3 consecutive transmembrane segments (helical) span residues 179–199 (VLTLAVTLTLGWPLYLALNVS), 225–245 (IYISDAGVLAVVYGLFRLAMA), and 249–269 (AWVVCVYGVPLLVVNGFLVLI). Residues 315 to 319 (HVAHH) carry the Histidine box-3 motif.

Belongs to the fatty acid desaturase type 1 family.

The protein resides in the endoplasmic reticulum membrane. The protein operates within lipid metabolism; polyunsaturated fatty acid biosynthesis. ER (microsomal) omega-6 fatty acid desaturase introduces the second double bond in the biosynthesis of 18:3 fatty acids, important constituents of plant membranes. It is thought to use cytochrome b5 as an electron donor and to act on fatty acids esterified to phosphatidylcholine and, possibly, other phospholipids. This is Omega-6 fatty acid desaturase, endoplasmic reticulum isozyme 2 (FAD2-2) from Glycine max (Soybean).